The chain runs to 305 residues: Ornithine carbamoyltransferase (305 aa).

Carbamoyl phosphate-binding positions include 54-57, glutamine 81, arginine 105, and 132-135; these read STRT and HPCQ. Residues asparagine 163, aspartate 220, and 224 to 225 contribute to the L-ornithine site; that span reads SM. Carbamoyl phosphate is bound by residues 260–261 and arginine 288; that span reads CL.

This sequence belongs to the aspartate/ornithine carbamoyltransferase superfamily. OTCase family.

It is found in the cytoplasm. The catalysed reaction is carbamoyl phosphate + L-ornithine = L-citrulline + phosphate + H(+). Its pathway is amino-acid biosynthesis; L-arginine biosynthesis; L-arginine from L-ornithine and carbamoyl phosphate: step 1/3. Functionally, reversibly catalyzes the transfer of the carbamoyl group from carbamoyl phosphate (CP) to the N(epsilon) atom of ornithine (ORN) to produce L-citrulline. In Chromohalobacter salexigens (strain ATCC BAA-138 / DSM 3043 / CIP 106854 / NCIMB 13768 / 1H11), this protein is Ornithine carbamoyltransferase.